A 308-amino-acid polypeptide reads, in one-letter code: D-alanine--D-alanine ligase (308 aa).

One can recognise an ATP-grasp domain in the interval 100 to 295; it reads KEVFVRNGLP…FDGLIGRLIE (196 aa). 127 to 180 serves as a coordination point for ATP; the sequence is PFAFPAFIKSNNGGSSLALHRVSCPGELARALDELFTRGGEAIIEPAVEGVEVT. Residues Asp249, Glu262, and Asn264 each contribute to the Mg(2+) site.

The protein belongs to the D-alanine--D-alanine ligase family. Mg(2+) serves as cofactor. Requires Mn(2+) as cofactor.

The protein resides in the cytoplasm. It carries out the reaction 2 D-alanine + ATP = D-alanyl-D-alanine + ADP + phosphate + H(+). It functions in the pathway cell wall biogenesis; peptidoglycan biosynthesis. Its function is as follows. Cell wall formation. In Oleidesulfovibrio alaskensis (strain ATCC BAA-1058 / DSM 17464 / G20) (Desulfovibrio alaskensis), this protein is D-alanine--D-alanine ligase.